A 433-amino-acid polypeptide reads, in one-letter code: Serine hydroxymethyltransferase (433 aa).

(6S)-5,6,7,8-tetrahydrofolate is bound at residue 122–124 (AHV). The residue at position 228 (lysine 228) is an N6-(pyridoxal phosphate)lysine.

Belongs to the SHMT family. In terms of assembly, homodimer. Requires pyridoxal 5'-phosphate as cofactor.

Its subcellular location is the cytoplasm. It participates in amino-acid biosynthesis; glycine biosynthesis; glycine from L-serine: step 1/1. In terms of biological role, catalyzes the reversible interconversion of serine and glycine with a modified folate serving as the one-carbon carrier. Also exhibits a pteridine-independent aldolase activity toward beta-hydroxyamino acids, producing glycine and aldehydes, via a retro-aldol mechanism. The protein is Serine hydroxymethyltransferase of Sulfolobus acidocaldarius (strain ATCC 33909 / DSM 639 / JCM 8929 / NBRC 15157 / NCIMB 11770).